The sequence spans 481 residues: UDP-N-acetylmuramoyl-L-alanyl-D-glutamate--L-lysine ligase (481 aa).

Ser42 contacts UDP-N-acetyl-alpha-D-muramoyl-L-alanyl-D-glutamate. Residue 118–124 (GTKGKTT) coordinates ATP. UDP-N-acetyl-alpha-D-muramoyl-L-alanyl-D-glutamate is bound by residues Gln158, 160–161 (TT), Ser187, and Arg195. Lys229 carries the post-translational modification N6-carboxylysine. Positions 404 to 407 (DDPN) match the L-lysine recognition motif motif.

It belongs to the MurCDEF family. MurE subfamily. Carboxylation is probably crucial for Mg(2+) binding and, consequently, for the gamma-phosphate positioning of ATP.

It localises to the cytoplasm. The catalysed reaction is UDP-N-acetyl-alpha-D-muramoyl-L-alanyl-D-glutamate + L-lysine + ATP = UDP-N-acetyl-alpha-D-muramoyl-L-alanyl-gamma-D-glutamyl-L-lysine + ADP + phosphate + H(+). It functions in the pathway cell wall biogenesis; peptidoglycan biosynthesis. Functionally, catalyzes the addition of L-lysine to the nucleotide precursor UDP-N-acetylmuramoyl-L-alanyl-D-glutamate (UMAG) in the biosynthesis of bacterial cell-wall peptidoglycan. This Streptococcus pyogenes serotype M18 (strain MGAS8232) protein is UDP-N-acetylmuramoyl-L-alanyl-D-glutamate--L-lysine ligase.